An 806-amino-acid chain; its full sequence is MSGWPRIYYKLLNLPLSILVKSKSIPADPAPELGLDTSRPIMYVLPYNSKADLLTLRAQCLAHDLPDPLDPLEIDGTLLPRYVFIHGGPRVFTYYTPKEESIKLFHDYLDLHRSNPNLDVQMVPVSVMFGRSPGREKGEVNPPLRMLNGVQKFFAVLWLGRDSFVRFSPSVSLRHMADEHGTDKTIAQKLARVARMHFARQRLAAVGPRLPARQDLFNKLLASRAIAKAVEDEARSKKISHEKAQQNAVALMEEIAANFSYEMIRLTDRILGFTWNRLYQGINVHNAERVRQLAHDGHEIVYVPCHRSHMDYLLLSYVLYHQGLVPPHIAAGINLNFWPAGPIFRRLGAFFIRRTFKGNKLYSTVFREYLGELFSRGYSVEYFVEGGRSRTGRLLDPKTGTLSMTIQAMLRGGTRPITLVPIYIGYEHVMEVGTYAKELRGATKEKENMAQMLRGLSKLRNLGQGYVNFGEPIPLMTYLNQHVPEWRESIDPIEAVRPAWLTPTVNNIAADLMVRINNAGAANAMNLCCTALLASRQRSLTREQLTEQLDCYLDLLRNVPYSPDATVPSASASELIDHALQMNKFEVEKDTIGDIIILPREQAVLMTYYRNNIAHMLVLPSLMAAIVTQHRHISREALLHHVEVLYPMLKAELFLRWDRDELPDVIDALAREMARQGLITLQNDELQINPSHSRTLQLLAAGARETLQRYAITFWLLSANPAINRSSLEKESRTVAQRLSVLHGINAPEFFDKAVFSSLVLTLRDEGYISDSGDAEPAETLKVYQMLAELITSDVRLTIESATQGE.

The HXXXXD motif motif lies at 305–310; sequence CHRSHM.

Belongs to the GPAT/DAPAT family.

Its subcellular location is the cell inner membrane. The catalysed reaction is sn-glycerol 3-phosphate + an acyl-CoA = a 1-acyl-sn-glycero-3-phosphate + CoA. Its pathway is phospholipid metabolism; CDP-diacylglycerol biosynthesis; CDP-diacylglycerol from sn-glycerol 3-phosphate: step 1/3. The sequence is that of Glycerol-3-phosphate acyltransferase from Escherichia fergusonii (strain ATCC 35469 / DSM 13698 / CCUG 18766 / IAM 14443 / JCM 21226 / LMG 7866 / NBRC 102419 / NCTC 12128 / CDC 0568-73).